A 460-amino-acid chain; its full sequence is Cyclin-T1-2 (460 aa).

Disordered regions lie at residues Met1–Ala20 and Gln285–Ser345. Over residues Ser314 to Arg324 the composition is skewed to basic and acidic residues. Residues Asn332–Ser345 are compositionally biased toward polar residues.

The protein belongs to the cyclin family. Cyclin T subfamily.

This Arabidopsis thaliana (Mouse-ear cress) protein is Cyclin-T1-2 (CYCT1-2).